A 137-amino-acid polypeptide reads, in one-letter code: Small ribosomal subunit protein uS11 (137 aa).

Residues 1–11 show a composition bias toward low complexity; that stretch reads MAKQAKAGAAR. The tract at residues 1-32 is disordered; that stretch reads MAKQAKAGAARRPQRGRRRERKNVPRGQAHVQ. Residues 12–21 show a composition bias toward basic residues; the sequence is RPQRGRRRER.

Belongs to the universal ribosomal protein uS11 family. In terms of assembly, part of the 30S ribosomal subunit. Interacts with proteins S7 and S18. Binds to IF-3.

Located on the platform of the 30S subunit, it bridges several disparate RNA helices of the 16S rRNA. Forms part of the Shine-Dalgarno cleft in the 70S ribosome. This chain is Small ribosomal subunit protein uS11, found in Herpetosiphon aurantiacus (strain ATCC 23779 / DSM 785 / 114-95).